The chain runs to 307 residues: uncharacterized protein (307 aa).

The next 8 helical transmembrane spans lie at 1–21 (MLIL…MNML), 52–72 (IVFT…IGFV), 99–119 (FIAI…LLFF), 133–153 (FLGL…AGPL), 174–194 (LLIG…IGIL), 208–228 (AMSV…MAAV), 242–262 (VVFN…ATGF), and 277–297 (FSLL…NLFY).

It localises to the cell membrane. This is an uncharacterized protein from Bacillus subtilis (strain 168).